We begin with the raw amino-acid sequence, 303 residues long: Eukaryotic translation initiation factor 3 subunit F (303 aa).

Residues 1–10 show a composition bias toward polar residues; that stretch reads MSLDTSSSAI. Residues 1–25 form a disordered region; that stretch reads MSLDTSSSAIHLQLPPTSSSLRPPS. Residues 12 to 25 show a composition bias toward low complexity; it reads LQLPPTSSSLRPPS. The MPN domain maps to 27–165; sequence ITVHPSVIAQ…VKGWVSQPLG (139 aa).

This sequence belongs to the eIF-3 subunit F family. In terms of assembly, component of the eukaryotic translation initiation factor 3 (eIF-3) complex.

It localises to the cytoplasm. Component of the eukaryotic translation initiation factor 3 (eIF-3) complex, which is involved in protein synthesis of a specialized repertoire of mRNAs and, together with other initiation factors, stimulates binding of mRNA and methionyl-tRNAi to the 40S ribosome. The eIF-3 complex specifically targets and initiates translation of a subset of mRNAs involved in cell proliferation. This is Eukaryotic translation initiation factor 3 subunit F from Cryptococcus neoformans var. neoformans serotype D (strain B-3501A) (Filobasidiella neoformans).